Consider the following 161-residue polypeptide: C-type lectin lectoxin-Lio3 (161 aa).

An N-terminal signal peptide occupies residues 1-23; it reads MRRFIFMSLGLLVLAFSLSGIGA. Cystine bridges form between C27/C38, C55/C154, and C129/C146. One can recognise a C-type lectin domain in the interval 34–155; the sequence is HNISCYKLFT…CGLLHYFICQ (122 aa). N35 is a glycosylation site (N-linked (GlcNAc...) asparagine). The Mannose-binding motif lies at 117–119; that stretch reads KGE. Ca(2+)-binding residues include E127, N142, and D143.

The protein belongs to the true venom lectin family. As to expression, expressed by the venom gland.

It localises to the secreted. Its function is as follows. Mannose-binding lectin which recognizes specific carbohydrate structures and agglutinates a variety of animal cells by binding to cell-surface glycoproteins and glycolipids. May be a calcium-dependent lectin. The chain is C-type lectin lectoxin-Lio3 from Erythrolamprus poecilogyrus (Water snake).